The primary structure comprises 32 residues: Trypsin inhibitor 2b (32 aa).

3 disulfides stabilise this stretch: cysteine 3–cysteine 20, cysteine 10–cysteine 22, and cysteine 16–cysteine 29.

The protein belongs to the protease inhibitor I7 (squash-type serine protease inhibitor) family.

Its subcellular location is the secreted. Functionally, inhibits trypsin. This chain is Trypsin inhibitor 2b, found in Cucumis sativus (Cucumber).